A 357-amino-acid polypeptide reads, in one-letter code: SrfA-induced gene J protein (357 aa).

The segment at 1–29 (MGRVEDQIKDNYNSLSHEGERLNREAKIE) is disordered. A coiled-coil region spans residues 5-51 (EDQIKDNYNSLSHEGERLNREAKIESEKLKNNAKLDAKDMKKDIDES). Over residues 17 to 29 (HEGERLNREAKIE) the composition is skewed to basic and acidic residues. 3 N-linked (GlcNAc...) asparagine glycosylation sites follow: Asn-114, Asn-157, and Asn-172. Coiled-coil stretches lie at residues 150–177 (KNFKRTANETQKDANRLTSDVKNESNKI) and 223–270 (DETK…DAIE). Residues 290 to 307 (IWGSIGLIGGATATSYLF) traverse the membrane as a helical segment.

It is found in the membrane. The chain is SrfA-induced gene J protein (sigJ) from Dictyostelium discoideum (Social amoeba).